A 327-amino-acid chain; its full sequence is Ribosomal RNA small subunit methyltransferase H (327 aa).

S-adenosyl-L-methionine is bound by residues 42 to 44 (GGH), Asp61, Leu95, Asp109, and Gln116.

The protein belongs to the methyltransferase superfamily. RsmH family.

Its subcellular location is the cytoplasm. The enzyme catalyses cytidine(1402) in 16S rRNA + S-adenosyl-L-methionine = N(4)-methylcytidine(1402) in 16S rRNA + S-adenosyl-L-homocysteine + H(+). Specifically methylates the N4 position of cytidine in position 1402 (C1402) of 16S rRNA. This chain is Ribosomal RNA small subunit methyltransferase H, found in Desulfovibrio desulfuricans (strain ATCC 27774 / DSM 6949 / MB).